Here is a 197-residue protein sequence, read N- to C-terminus: Holliday junction resolvase RecU (197 aa).

Residues 1-21 are disordered; sequence MVNYPSGVRAGGYPQKKKNQN. Mg(2+) is bound by residues T82, D84, D97, and Q116.

Belongs to the RecU family. Mg(2+) is required as a cofactor.

The protein resides in the cytoplasm. It carries out the reaction Endonucleolytic cleavage at a junction such as a reciprocal single-stranded crossover between two homologous DNA duplexes (Holliday junction).. Endonuclease that resolves Holliday junction intermediates in genetic recombination. Cleaves mobile four-strand junctions by introducing symmetrical nicks in paired strands. Promotes annealing of linear ssDNA with homologous dsDNA. Required for DNA repair, homologous recombination and chromosome segregation. The protein is Holliday junction resolvase RecU of Oenococcus oeni (strain ATCC BAA-331 / PSU-1).